The following is a 285-amino-acid chain: Urease accessory protein UreD (285 aa).

It belongs to the UreD family. As to quaternary structure, ureD, UreF and UreG form a complex that acts as a GTP-hydrolysis-dependent molecular chaperone, activating the urease apoprotein by helping to assemble the nickel containing metallocenter of UreC. The UreE protein probably delivers the nickel.

The protein localises to the cytoplasm. In terms of biological role, required for maturation of urease via the functional incorporation of the urease nickel metallocenter. The sequence is that of Urease accessory protein UreD from Azoarcus sp. (strain BH72).